Here is a 136-residue protein sequence, read N- to C-terminus: Protein NrdI (136 aa).

This sequence belongs to the NrdI family.

In terms of biological role, probably involved in ribonucleotide reductase function. This is Protein NrdI from Salmonella typhi.